A 269-amino-acid chain; its full sequence is Small ribosomal subunit protein eS1 (269 aa).

Residues 1 to 20 (MAVGKNKGVSKGGKKGSKKK) are disordered.

Belongs to the eukaryotic ribosomal protein eS1 family. In terms of assembly, component of the small ribosomal subunit. Mature ribosomes consist of a small (40S) and a large (60S) subunit. The 40S subunit contains about 33 different proteins and 1 molecule of RNA (18S). The 60S subunit contains about 49 different proteins and 3 molecules of RNA (28S, 5.8S and 5S).

The protein resides in the cytoplasm. In terms of biological role, has an essential role in oogenesis. The polypeptide is Small ribosomal subunit protein eS1 (Anopheles gambiae (African malaria mosquito)).